The following is a 507-amino-acid chain: ATP synthase subunit alpha, chloroplastic (507 aa).

170–177 (GDRQTGKT) provides a ligand contact to ATP. Threonine 257 is subject to Phosphothreonine.

The protein belongs to the ATPase alpha/beta chains family. In terms of assembly, F-type ATPases have 2 components, CF(1) - the catalytic core - and CF(0) - the membrane proton channel. CF(1) has five subunits: alpha(3), beta(3), gamma(1), delta(1), epsilon(1). CF(0) has four main subunits: a, b, b' and c.

It is found in the plastid. It localises to the chloroplast thylakoid membrane. It carries out the reaction ATP + H2O + 4 H(+)(in) = ADP + phosphate + 5 H(+)(out). In terms of biological role, produces ATP from ADP in the presence of a proton gradient across the membrane. The alpha chain is a regulatory subunit. The sequence is that of ATP synthase subunit alpha, chloroplastic from Arabis hirsuta (Hairy rock-cress).